A 428-amino-acid polypeptide reads, in one-letter code: Enolase (428 aa).

Glutamine 163 is a binding site for (2R)-2-phosphoglycerate. Glutamate 205 acts as the Proton donor in catalysis. Residues aspartate 242, glutamate 286, and aspartate 313 each coordinate Mg(2+). Residues lysine 338, arginine 367, serine 368, and lysine 389 each contribute to the (2R)-2-phosphoglycerate site. The active-site Proton acceptor is lysine 338.

The protein belongs to the enolase family. Requires Mg(2+) as cofactor.

It is found in the cytoplasm. The protein localises to the secreted. It localises to the cell surface. The catalysed reaction is (2R)-2-phosphoglycerate = phosphoenolpyruvate + H2O. It functions in the pathway carbohydrate degradation; glycolysis; pyruvate from D-glyceraldehyde 3-phosphate: step 4/5. Its function is as follows. Catalyzes the reversible conversion of 2-phosphoglycerate (2-PG) into phosphoenolpyruvate (PEP). It is essential for the degradation of carbohydrates via glycolysis. The polypeptide is Enolase (Lactobacillus acidophilus (strain ATCC 700396 / NCK56 / N2 / NCFM)).